We begin with the raw amino-acid sequence, 112 residues long: T cell receptor alpha variable 13-1 (112 aa).

The first 20 residues, 1–20 (MTSIRAVFIFLWLQLDLVNG), serve as a signal peptide directing secretion. One can recognise an Ig-like domain in the interval 21-112 (ENVEQHPSTL…DSAVYFCAAS (92 aa)). Cysteines 42 and 109 form a disulfide. N-linked (GlcNAc...) asparagine glycosylation occurs at Asn-86.

In terms of assembly, alpha-beta TR is a heterodimer composed of an alpha and beta chain; disulfide-linked. The alpha-beta TR is associated with the transmembrane signaling CD3 coreceptor proteins to form the TR-CD3 (TcR or TCR). The assembly of alpha-beta TR heterodimers with CD3 occurs in the endoplasmic reticulum where a single alpha-beta TR heterodimer associates with one CD3D-CD3E heterodimer, one CD3G-CD3E heterodimer and one CD247 homodimer forming a stable octameric structure. CD3D-CD3E and CD3G-CD3E heterodimers preferentially associate with TR alpha and TR beta chains, respectively. The association of the CD247 homodimer is the last step of TcR assembly in the endoplasmic reticulum and is required for transport to the cell surface.

The protein localises to the cell membrane. Its function is as follows. V region of the variable domain of T cell receptor (TR) alpha chain that participates in the antigen recognition. Alpha-beta T cell receptors are antigen specific receptors which are essential to the immune response and are present on the cell surface of T lymphocytes. Recognize peptide-major histocompatibility (MH) (pMH) complexes that are displayed by antigen presenting cells (APC), a prerequisite for efficient T cell adaptive immunity against pathogens. Binding of alpha-beta TR to pMH complex initiates TR-CD3 clustering on the cell surface and intracellular activation of LCK that phosphorylates the ITAM motifs of CD3G, CD3D, CD3E and CD247 enabling the recruitment of ZAP70. In turn ZAP70 phosphorylates LAT, which recruits numerous signaling molecules to form the LAT signalosome. The LAT signalosome propagates signal branching to three major signaling pathways, the calcium, the mitogen-activated protein kinase (MAPK) kinase and the nuclear factor NF-kappa-B (NF-kB) pathways, leading to the mobilization of transcription factors that are critical for gene expression and essential for T cell growth and differentiation. The T cell repertoire is generated in the thymus, by V-(D)-J rearrangement. This repertoire is then shaped by intrathymic selection events to generate a peripheral T cell pool of self-MH restricted, non-autoaggressive T cells. Post-thymic interaction of alpha-beta TR with the pMH complexes shapes TR structural and functional avidity. The sequence is that of T cell receptor alpha variable 13-1 from Homo sapiens (Human).